We begin with the raw amino-acid sequence, 279 residues long: MAACAGGPGSWSENILKYFLRNNQITAEDGAEILWSHAANHKSQMNEALKSAAHMIEADVLLPSDGSEHGQPIMAHPPETSSDNTLQEWLAEVVKSNKGIKLDFKSLAAVRASMLFLDNMKQHLQRPVWINADILPGPNGSSKVVDAKAFLDTVTSFFPDVTFSLGWTTGWHPEKVNEGYSWSMVKEMDYICSELTQPVTFPVRAALVRQSCPQLLWLLTKSNRYSLTVWTGKDDIYSTEDLLYIRDYFNKTQVFYDISEPQNHEFKQAIGIRGHSLRI.

It belongs to the menorin family.

Functionally, essential for survival of retinal photoreceptor cells. In Mus musculus (Mouse), this protein is Protein FAM151B (Fam151b).